Consider the following 80-residue polypeptide: Kappa-actitoxin-Avd4f (80 aa).

The signal sequence occupies residues 1 to 19; it reads MNKALFLCLVVLCAAVVFA. The propeptide occupies 20-31; the sequence is AEDLQKAKHAPF. 3 disulfides stabilise this stretch: cysteine 41-cysteine 76, cysteine 43-cysteine 69, and cysteine 59-cysteine 77.

This sequence belongs to the sea anemone type 3 (BDS) potassium channel toxin family. As to expression, moderately expressed in the ectodermal tissue from the distal and proximal tentacles, body wall, and oral disk.

The protein resides in the secreted. It localises to the nematocyst. In terms of biological role, blocks Kv3 voltage-gated potassium channels. Reduces blood pressure. The protein is Kappa-actitoxin-Avd4f of Anemonia viridis (Snakelocks anemone).